We begin with the raw amino-acid sequence, 908 residues long: Magnesium-transporting ATPase, P-type 1 (908 aa).

Residues 1–20 (MTDMNIENRKLNRPASENDK) are compositionally biased toward basic and acidic residues. The interval 1–21 (MTDMNIENRKLNRPASENDKQ) is disordered. The Cytoplasmic segment spans residues 1 to 80 (MTDMNIENRK…QVPPALIQLL (80 aa)). The chain crosses the membrane as a helical span at residues 81 to 101 (QAFNNPFIYVLMALAGVSFIT). Over 102–113 (DYWLPLRRGEET) the chain is Extracellular. The chain crosses the membrane as a helical span at residues 114–134 (DLTGVLIILTMVSLSGLLRFW). Residues 135 to 293 (QEFRTNRAAQ…QTAFDRGVNS (159 aa)) are Cytoplasmic-facing. Residues 294–314 (VSWLLIRFMLIMVPVVLLING) traverse the membrane as a helical segment. The Extracellular portion of the chain corresponds to 315–323 (FSKGDWVEA). A helical membrane pass occupies residues 324-341 (SLFALAVAVGLTPEMLPM). Glu-337 is a binding site for Mg(2+). The Cytoplasmic segment spans residues 342–704 (IVSSNLAKGA…IKGRETFGNI (363 aa)). Asp-379 serves as the catalytic 4-aspartylphosphate intermediate. Asp-650, Asp-654, and Asn-718 together coordinate Mg(2+). Residues 705 to 724 (IKYLNMTASSNFGNVFSVLV) form a helical membrane-spanning segment. The Extracellular segment spans residues 725–733 (ASAFIPFLP). Residues 734–753 (MLAIHLLIQNLMYDISQLSL) traverse the membrane as a helical segment. Asn-743 and Asp-747 together coordinate Mg(2+). Residues 754–775 (PWDKMDKEFLRKPRKWDAKNIG) are Cytoplasmic-facing. Residues 776–799 (RFMLWIGPTSSIFDITTFALMWYV) form a helical membrane-spanning segment. Topologically, residues 800–808 (FAANNVEAQ) are extracellular. A helical membrane pass occupies residues 809 to 827 (ALFQSGWFIEGLLSQTLVV). Topologically, residues 828–840 (HMLRTQKIPFIQS) are cytoplasmic. Residues 841–860 (RATLPVLLTTGLIMAIGIYI) form a helical membrane-spanning segment. Residues 861–875 (PFSPLGAMVGLEPLP) lie on the Extracellular side of the membrane. A helical membrane pass occupies residues 876–895 (LSYFPWLVATLLSYCLVAQG). Residues 896-908 (MKRFYIKRFGQWF) are Cytoplasmic-facing.

The protein belongs to the cation transport ATPase (P-type) (TC 3.A.3) family. Type IIIB subfamily.

It localises to the cell inner membrane. The enzyme catalyses Mg(2+)(out) + ATP + H2O = Mg(2+)(in) + ADP + phosphate + H(+). In terms of biological role, mediates magnesium influx to the cytosol. The sequence is that of Magnesium-transporting ATPase, P-type 1 (mgtB) from Salmonella typhimurium (strain LT2 / SGSC1412 / ATCC 700720).